We begin with the raw amino-acid sequence, 565 residues long: Probable transcription factor lepB (565 aa).

The tract at residues 52–259 (KRYAEDVTYL…PRNLDDRDLD (208 aa)) is fungal specific transcription factor domain.

The protein resides in the nucleus. Its function is as follows. Probable transcription factor; part of the gene cluster 23 that mediates the biosynthesis of a family of 2-pyridones known as leporins. This chain is Probable transcription factor lepB, found in Aspergillus flavus (strain ATCC 200026 / FGSC A1120 / IAM 13836 / NRRL 3357 / JCM 12722 / SRRC 167).